A 210-amino-acid polypeptide reads, in one-letter code: Thiamine-phosphate synthase (210 aa).

4-amino-2-methyl-5-(diphosphooxymethyl)pyrimidine-binding positions include 38 to 42 and Asn70; that span reads QLREK. 2 residues coordinate Mg(2+): Asp71 and Asp90. Ser109 contacts 4-amino-2-methyl-5-(diphosphooxymethyl)pyrimidine. 139–141 provides a ligand contact to 2-[(2R,5Z)-2-carboxy-4-methylthiazol-5(2H)-ylidene]ethyl phosphate; the sequence is TPT. A 4-amino-2-methyl-5-(diphosphooxymethyl)pyrimidine-binding site is contributed by Lys142. Residues Gly170 and 190–191 each bind 2-[(2R,5Z)-2-carboxy-4-methylthiazol-5(2H)-ylidene]ethyl phosphate; that span reads VS.

It belongs to the thiamine-phosphate synthase family. Mg(2+) is required as a cofactor.

It carries out the reaction 2-[(2R,5Z)-2-carboxy-4-methylthiazol-5(2H)-ylidene]ethyl phosphate + 4-amino-2-methyl-5-(diphosphooxymethyl)pyrimidine + 2 H(+) = thiamine phosphate + CO2 + diphosphate. The catalysed reaction is 2-(2-carboxy-4-methylthiazol-5-yl)ethyl phosphate + 4-amino-2-methyl-5-(diphosphooxymethyl)pyrimidine + 2 H(+) = thiamine phosphate + CO2 + diphosphate. The enzyme catalyses 4-methyl-5-(2-phosphooxyethyl)-thiazole + 4-amino-2-methyl-5-(diphosphooxymethyl)pyrimidine + H(+) = thiamine phosphate + diphosphate. Its pathway is cofactor biosynthesis; thiamine diphosphate biosynthesis; thiamine phosphate from 4-amino-2-methyl-5-diphosphomethylpyrimidine and 4-methyl-5-(2-phosphoethyl)-thiazole: step 1/1. Functionally, condenses 4-methyl-5-(beta-hydroxyethyl)thiazole monophosphate (THZ-P) and 2-methyl-4-amino-5-hydroxymethyl pyrimidine pyrophosphate (HMP-PP) to form thiamine monophosphate (TMP). The polypeptide is Thiamine-phosphate synthase (Leptospira biflexa serovar Patoc (strain Patoc 1 / Ames)).